Here is a 33-residue protein sequence, read N- to C-terminus: Protamine TP16 (33 aa).

The interval 1–33 (MPRRRRSSSRPVRRRRRARVSRRRRRRGRRRRR) is disordered.

In terms of tissue distribution, testis.

It localises to the nucleus. The protein localises to the chromosome. Its function is as follows. Protamines substitute for histones in the chromatin of sperm during the haploid phase of spermatogenesis. They compact sperm DNA into a highly condensed, stable and inactive complex. This chain is Protamine TP16, found in Oncorhynchus mykiss (Rainbow trout).